Reading from the N-terminus, the 161-residue chain is Endoribonuclease YbeY (161 aa).

Residues His-120, His-124, and Asp-130 each contribute to the Zn(2+) site.

Belongs to the endoribonuclease YbeY family. It depends on Zn(2+) as a cofactor.

The protein resides in the cytoplasm. Its function is as follows. Single strand-specific metallo-endoribonuclease involved in late-stage 70S ribosome quality control and in maturation of the 3' terminus of the 16S rRNA. This chain is Endoribonuclease YbeY, found in Chlamydia trachomatis serovar L2 (strain ATCC VR-902B / DSM 19102 / 434/Bu).